A 337-amino-acid polypeptide reads, in one-letter code: Phosphoribosylformylglycinamidine cyclo-ligase (337 aa).

Belongs to the AIR synthase family.

It localises to the cytoplasm. It carries out the reaction 2-formamido-N(1)-(5-O-phospho-beta-D-ribosyl)acetamidine + ATP = 5-amino-1-(5-phospho-beta-D-ribosyl)imidazole + ADP + phosphate + H(+). It participates in purine metabolism; IMP biosynthesis via de novo pathway; 5-amino-1-(5-phospho-D-ribosyl)imidazole from N(2)-formyl-N(1)-(5-phospho-D-ribosyl)glycinamide: step 2/2. The polypeptide is Phosphoribosylformylglycinamidine cyclo-ligase (Pseudothermotoga lettingae (strain ATCC BAA-301 / DSM 14385 / NBRC 107922 / TMO) (Thermotoga lettingae)).